The following is a 167-amino-acid chain: NAD(P)H-quinone oxidoreductase subunit I, chloroplastic (167 aa).

2 4Fe-4S ferredoxin-type domains span residues 55–84 and 95–124; these read GRIHFEFDKCIACEVCVRVCPIDLPVVDWK and LNYSIDFGICIFCGNCVEYCPTNCLSMTEE. [4Fe-4S] cluster contacts are provided by Cys-64, Cys-67, Cys-70, Cys-74, Cys-104, Cys-107, Cys-110, and Cys-114.

This sequence belongs to the complex I 23 kDa subunit family. As to quaternary structure, NDH is composed of at least 16 different subunits, 5 of which are encoded in the nucleus. [4Fe-4S] cluster serves as cofactor.

It is found in the plastid. The protein resides in the chloroplast thylakoid membrane. The enzyme catalyses a plastoquinone + NADH + (n+1) H(+)(in) = a plastoquinol + NAD(+) + n H(+)(out). The catalysed reaction is a plastoquinone + NADPH + (n+1) H(+)(in) = a plastoquinol + NADP(+) + n H(+)(out). NDH shuttles electrons from NAD(P)H:plastoquinone, via FMN and iron-sulfur (Fe-S) centers, to quinones in the photosynthetic chain and possibly in a chloroplast respiratory chain. The immediate electron acceptor for the enzyme in this species is believed to be plastoquinone. Couples the redox reaction to proton translocation, and thus conserves the redox energy in a proton gradient. In Barbarea verna (Land cress), this protein is NAD(P)H-quinone oxidoreductase subunit I, chloroplastic.